The primary structure comprises 355 residues: Peptide chain release factor 1 (355 aa).

Gln231 is subject to N5-methylglutamine. Residues 280–293 (KERKAKEQSERKDQ) show a composition bias toward basic and acidic residues. The disordered stretch occupies residues 280-307 (KERKAKEQSERKDQVGTGDRSGRIRTYN).

It belongs to the prokaryotic/mitochondrial release factor family. Methylated by PrmC. Methylation increases the termination efficiency of RF1.

It localises to the cytoplasm. Its function is as follows. Peptide chain release factor 1 directs the termination of translation in response to the peptide chain termination codons UAG and UAA. The polypeptide is Peptide chain release factor 1 (Campylobacter hominis (strain ATCC BAA-381 / DSM 21671 / CCUG 45161 / LMG 19568 / NCTC 13146 / CH001A)).